Here is a 236-residue protein sequence, read N- to C-terminus: MSTHINAKMGDYADTVLLPGDPLRAKYIAENFLENVKQVNSVRNAFGYTGEYKGHRISVQGSGMGIPSMSIYINELVREFGVKTIIRVGSCGGIAPDVHVRDVLLAQGSSTDSAVTVNTFGPGFHYAPLADFKLLDTAYHVAGKLGIETKVGDIFAADRFYNDELDMEKLRDYGILGTEMESAGLYLLAAKLHFRALSVLTVSDLIFGDEKATAEERERTFNDMINISLETAIAGK.

Residue His-4 coordinates a purine D-ribonucleoside. Phosphate-binding positions include Gly-20, Arg-24, Arg-43, and 87-90; that span reads RVGS. A purine D-ribonucleoside contacts are provided by residues 179–181 and 203–204; these read EME and SD. The active-site Proton donor is the Asp-204.

This sequence belongs to the PNP/UDP phosphorylase family. Homohexamer; trimer of homodimers.

It catalyses the reaction a purine D-ribonucleoside + phosphate = a purine nucleobase + alpha-D-ribose 1-phosphate. The catalysed reaction is a purine 2'-deoxy-D-ribonucleoside + phosphate = a purine nucleobase + 2-deoxy-alpha-D-ribose 1-phosphate. Catalyzes the reversible phosphorolytic breakdown of the N-glycosidic bond in the beta-(deoxy)ribonucleoside molecules, with the formation of the corresponding free purine bases and pentose-1-phosphate. This is Purine nucleoside phosphorylase DeoD-type from Limosilactobacillus reuteri (strain DSM 20016) (Lactobacillus reuteri).